A 92-amino-acid polypeptide reads, in one-letter code: Large ribosomal subunit protein bL27 (92 aa).

The propeptide occupies 1 to 9 (MLKLNLQFF). Residues 14–34 (GVGSTKNGRDSQSKRLGAKRA) form a disordered region.

This sequence belongs to the bacterial ribosomal protein bL27 family. Post-translationally, the N-terminus is cleaved by ribosomal processing cysteine protease Prp.

In Exiguobacterium sibiricum (strain DSM 17290 / CCUG 55495 / CIP 109462 / JCM 13490 / 255-15), this protein is Large ribosomal subunit protein bL27.